Reading from the N-terminus, the 494-residue chain is UDP-N-acetylmuramate--L-alanine ligase (494 aa).

140 to 146 (GTHGKTT) is an ATP binding site.

It belongs to the MurCDEF family.

The protein localises to the cytoplasm. The catalysed reaction is UDP-N-acetyl-alpha-D-muramate + L-alanine + ATP = UDP-N-acetyl-alpha-D-muramoyl-L-alanine + ADP + phosphate + H(+). Its pathway is cell wall biogenesis; peptidoglycan biosynthesis. In terms of biological role, cell wall formation. The chain is UDP-N-acetylmuramate--L-alanine ligase from Nostoc sp. (strain PCC 7120 / SAG 25.82 / UTEX 2576).